We begin with the raw amino-acid sequence, 21 residues long: AKTENKTVTVRQTASPIXXXK.

The span at 1–15 (AKTENKTVTVRQTAS) shows a compositional bias: polar residues. The interval 1-21 (AKTENKTVTVRQTASPIXXXK) is disordered.

Belongs to the universal ribosomal protein uL30 family. In terms of assembly, part of the 50S ribosomal subunit.

This Brevundimonas diminuta (Pseudomonas diminuta) protein is Large ribosomal subunit protein uL30 (rpmD).